We begin with the raw amino-acid sequence, 471 residues long: Putative multidrug resistance protein MdtD (471 aa).

Transmembrane regions (helical) follow at residues L12–A32, M49–A69, I77–T97, V106–I126, F138–V158, W165–M185, F195–D215, L220–L240, F263–M283, V286–M306, L342–L362, L393–L413, and V431–S451.

Belongs to the major facilitator superfamily. TCR/Tet family.

The protein localises to the cell inner membrane. The protein is Putative multidrug resistance protein MdtD of Klebsiella pneumoniae (strain 342).